The primary structure comprises 425 residues: CinA-like protein (425 aa).

This sequence belongs to the CinA family.

The chain is CinA-like protein from Shewanella sp. (strain ANA-3).